We begin with the raw amino-acid sequence, 439 residues long: tRNA modification GTPase MnmE (439 aa).

Residues Arg-23, Glu-80, and Lys-120 each coordinate (6S)-5-formyl-5,6,7,8-tetrahydrofolate. The TrmE-type G domain occupies 217 to 365; that stretch reads GLKIVIAGEP…LLTALQSHLP (149 aa). Asn-227 provides a ligand contact to K(+). Residues 227-232, 246-252, and 271-274 each bind GTP; these read NAGKSS, TEVAGTT, and DTAG. Ser-231 lines the Mg(2+) pocket. K(+) is bound by residues Thr-246, Val-248, and Thr-251. Thr-252 contacts Mg(2+). Lys-439 contacts (6S)-5-formyl-5,6,7,8-tetrahydrofolate.

This sequence belongs to the TRAFAC class TrmE-Era-EngA-EngB-Septin-like GTPase superfamily. TrmE GTPase family. As to quaternary structure, homodimer. Heterotetramer of two MnmE and two MnmG subunits. It depends on K(+) as a cofactor.

Its subcellular location is the cytoplasm. Functionally, exhibits a very high intrinsic GTPase hydrolysis rate. Involved in the addition of a carboxymethylaminomethyl (cmnm) group at the wobble position (U34) of certain tRNAs, forming tRNA-cmnm(5)s(2)U34. In Rhizobium meliloti (strain 1021) (Ensifer meliloti), this protein is tRNA modification GTPase MnmE.